The chain runs to 510 residues: Abscisic acid 8'-hydroxylase 2 (510 aa).

A helical membrane pass occupies residues 3–23 (FLLFFVFVTAAVLCFVVPAFL). A heme-binding site is contributed by C441.

This sequence belongs to the cytochrome P450 family. Heme is required as a cofactor.

The protein resides in the membrane. The enzyme catalyses 2-cis-(+)-abscisate + reduced [NADPH--hemoprotein reductase] + O2 = (+)-8'-hydroxyabscisate + oxidized [NADPH--hemoprotein reductase] + H2O + H(+). It participates in plant hormone degradation; abscisic acid degradation. Involved in the oxidative degradation of abscisic acid. The protein is Abscisic acid 8'-hydroxylase 2 (CYP707A6) of Oryza sativa subsp. japonica (Rice).